The primary structure comprises 598 residues: Elongation factor 4 (598 aa).

The tr-type G domain maps to 3–185 (QHIRNFSIIA…MIVAQIPPPE (183 aa)). Residues 15–20 (DHGKST) and 132–135 (NKID) each bind GTP.

This sequence belongs to the TRAFAC class translation factor GTPase superfamily. Classic translation factor GTPase family. LepA subfamily.

The protein resides in the cell inner membrane. The enzyme catalyses GTP + H2O = GDP + phosphate + H(+). Its function is as follows. Required for accurate and efficient protein synthesis under certain stress conditions. May act as a fidelity factor of the translation reaction, by catalyzing a one-codon backward translocation of tRNAs on improperly translocated ribosomes. Back-translocation proceeds from a post-translocation (POST) complex to a pre-translocation (PRE) complex, thus giving elongation factor G a second chance to translocate the tRNAs correctly. Binds to ribosomes in a GTP-dependent manner. The protein is Elongation factor 4 of Nitrosomonas europaea (strain ATCC 19718 / CIP 103999 / KCTC 2705 / NBRC 14298).